We begin with the raw amino-acid sequence, 288 residues long: Thymidylate synthase (288 aa).

Residue arginine 21 participates in dUMP binding. Residue asparagine 51 coordinates (6R)-5,10-methylene-5,6,7,8-tetrahydrofolate. DUMP is bound at residue 150–151 (RR). Cysteine 170 serves as the catalytic Nucleophile. DUMP is bound by residues 190–193 (RSGD), asparagine 201, and 231–233 (HIY). Aspartate 193 provides a ligand contact to (6R)-5,10-methylene-5,6,7,8-tetrahydrofolate. (6R)-5,10-methylene-5,6,7,8-tetrahydrofolate is bound at residue alanine 287.

Belongs to the thymidylate synthase family. Bacterial-type ThyA subfamily. In terms of assembly, homodimer.

It localises to the cytoplasm. The catalysed reaction is dUMP + (6R)-5,10-methylene-5,6,7,8-tetrahydrofolate = 7,8-dihydrofolate + dTMP. It functions in the pathway pyrimidine metabolism; dTTP biosynthesis. Catalyzes the reductive methylation of 2'-deoxyuridine-5'-monophosphate (dUMP) to 2'-deoxythymidine-5'-monophosphate (dTMP) while utilizing 5,10-methylenetetrahydrofolate (mTHF) as the methyl donor and reductant in the reaction, yielding dihydrofolate (DHF) as a by-product. This enzymatic reaction provides an intracellular de novo source of dTMP, an essential precursor for DNA biosynthesis. This chain is Thymidylate synthase, found in Phytoplasma mali (strain AT).